We begin with the raw amino-acid sequence, 260 residues long: Hydroxyethylthiazole kinase (260 aa).

Methionine 49 serves as a coordination point for substrate. The ATP site is built by arginine 124 and threonine 170. A substrate-binding site is contributed by glycine 197.

Belongs to the Thz kinase family. It depends on Mg(2+) as a cofactor.

It carries out the reaction 5-(2-hydroxyethyl)-4-methylthiazole + ATP = 4-methyl-5-(2-phosphooxyethyl)-thiazole + ADP + H(+). It functions in the pathway cofactor biosynthesis; thiamine diphosphate biosynthesis; 4-methyl-5-(2-phosphoethyl)-thiazole from 5-(2-hydroxyethyl)-4-methylthiazole: step 1/1. Catalyzes the phosphorylation of the hydroxyl group of 4-methyl-5-beta-hydroxyethylthiazole (THZ). The chain is Hydroxyethylthiazole kinase from Yersinia enterocolitica serotype O:8 / biotype 1B (strain NCTC 13174 / 8081).